We begin with the raw amino-acid sequence, 325 residues long: Probable serine/threonine-protein phosphatase 2A activator 1 (325 aa).

This sequence belongs to the PTPA-type PPIase family.

It is found in the cytoplasm. It carries out the reaction [protein]-peptidylproline (omega=180) = [protein]-peptidylproline (omega=0). Functionally, PPIases accelerate the folding of proteins. It catalyzes the cis-trans isomerization of proline imidic peptide bonds in oligopeptides. Acts as a regulatory subunit for PP2A-like phosphatases modulating their activity or substrate specificity, probably by inducing a conformational change in the catalytic subunit, a direct target of the PPIase. This Dictyostelium discoideum (Social amoeba) protein is Probable serine/threonine-protein phosphatase 2A activator 1 (ppp2r4A).